The sequence spans 210 residues: Interleukin-6 (210 aa).

An N-terminal signal peptide occupies residues 1-25; that stretch reads MNSLSTSAFSPVAFSLGLLLVMATA. A disulfide bridge connects residues Cys72 and Cys78. Phosphoserine is present on Ser81. A disulfide bond links Cys101 and Cys111.

The protein belongs to the IL-6 superfamily. Component of a hexamer of two molecules each of IL6, IL6R and IL6ST; first binds to IL6R to associate with the signaling subunit IL6ST. Interacts with IL6R (via the N-terminal ectodomain); this interaction may be affected by IL6R-binding with SORL1, hence decreasing IL6 cis signaling. Interacts with SORL1 (via the N-terminal ectodomain); this interaction leads to IL6 internalization and lysosomal degradation. May form a trimeric complex with the soluble SORL1 ectodomain and soluble IL6R receptor; this interaction might stabilize circulating IL6, hence promoting IL6 trans signaling.

The protein resides in the secreted. In terms of biological role, cytokine with a wide variety of biological functions in immunity, tissue regeneration, and metabolism. Binds to IL6R, then the complex associates to the signaling subunit IL6ST/gp130 to trigger the intracellular IL6-signaling pathway. The interaction with the membrane-bound IL6R and IL6ST stimulates 'classic signaling', whereas the binding of IL6 and soluble IL6R to IL6ST stimulates 'trans-signaling'. Alternatively, 'cluster signaling' occurs when membrane-bound IL6:IL6R complexes on transmitter cells activate IL6ST receptors on neighboring receiver cells. Its function is as follows. IL6 is a potent inducer of the acute phase response. Rapid production of IL6 contributes to host defense during infection and tissue injury, but excessive IL6 synthesis is involved in disease pathology. In the innate immune response, is synthesized by myeloid cells, such as macrophages and dendritic cells, upon recognition of pathogens through toll-like receptors (TLRs) at the site of infection or tissue injury. In the adaptive immune response, is required for the differentiation of B cells into immunoglobulin-secreting cells. Plays a major role in the differentiation of CD4(+) T cell subsets. Essential factor for the development of T follicular helper (Tfh) cells that are required for the induction of germinal-center formation. Required to drive naive CD4(+) T cells to the Th17 lineage. Also required for proliferation of myeloma cells and the survival of plasmablast cells. Acts as an essential factor in bone homeostasis and on vessels directly or indirectly by induction of VEGF, resulting in increased angiogenesis activity and vascular permeability. Induces, through 'trans-signaling' and synergistically with IL1B and TNF, the production of VEGF. Involved in metabolic controls, is discharged into the bloodstream after muscle contraction increasing lipolysis and improving insulin resistance. 'Trans-signaling' in central nervous system also regulates energy and glucose homeostasis. Mediates, through GLP-1, crosstalk between insulin-sensitive tissues, intestinal L cells and pancreatic islets to adapt to changes in insulin demand. Also acts as a myokine. Plays a protective role during liver injury, being required for maintenance of tissue regeneration. Also has a pivotal role in iron metabolism by regulating HAMP/hepcidin expression upon inflammation or bacterial infection. Through activation of IL6ST-YAP-NOTCH pathway, induces inflammation-induced epithelial regeneration. The chain is Interleukin-6 (IL6) from Mustela putorius furo (European domestic ferret).